We begin with the raw amino-acid sequence, 142 residues long: Large ribosomal subunit protein uL13 (142 aa).

Belongs to the universal ribosomal protein uL13 family. As to quaternary structure, part of the 50S ribosomal subunit.

In terms of biological role, this protein is one of the early assembly proteins of the 50S ribosomal subunit, although it is not seen to bind rRNA by itself. It is important during the early stages of 50S assembly. In Akkermansia muciniphila (strain ATCC BAA-835 / DSM 22959 / JCM 33894 / BCRC 81048 / CCUG 64013 / CIP 107961 / Muc), this protein is Large ribosomal subunit protein uL13.